A 146-amino-acid polypeptide reads, in one-letter code: 1,4-dihydroxy-2-naphthoyl-CoA hydrolase (146 aa).

Aspartate 15 is an active-site residue.

The protein belongs to the 4-hydroxybenzoyl-CoA thioesterase family. DHNA-CoA hydrolase subfamily.

The enzyme catalyses 1,4-dihydroxy-2-naphthoyl-CoA + H2O = 1,4-dihydroxy-2-naphthoate + CoA + H(+). It functions in the pathway cofactor biosynthesis; phylloquinone biosynthesis. Its pathway is quinol/quinone metabolism; 1,4-dihydroxy-2-naphthoate biosynthesis; 1,4-dihydroxy-2-naphthoate from chorismate: step 7/7. In terms of biological role, catalyzes the hydrolysis of 1,4-dihydroxy-2-naphthoyl-CoA (DHNA-CoA) to 1,4-dihydroxy-2-naphthoate (DHNA), a reaction involved in phylloquinone (vitamin K1) biosynthesis. The protein is 1,4-dihydroxy-2-naphthoyl-CoA hydrolase of Picosynechococcus sp. (strain ATCC 27264 / PCC 7002 / PR-6) (Agmenellum quadruplicatum).